The sequence spans 212 residues: Adenine phosphoribosyltransferase (212 aa).

This sequence belongs to the purine/pyrimidine phosphoribosyltransferase family. As to quaternary structure, homodimer.

It is found in the cytoplasm. It carries out the reaction AMP + diphosphate = 5-phospho-alpha-D-ribose 1-diphosphate + adenine. It participates in purine metabolism; AMP biosynthesis via salvage pathway; AMP from adenine: step 1/1. In terms of biological role, catalyzes a salvage reaction resulting in the formation of AMP, that is energically less costly than de novo synthesis. The protein is Adenine phosphoribosyltransferase of Mycobacterium tuberculosis (strain ATCC 25618 / H37Rv).